The following is a 1247-amino-acid chain: Clustered mitochondria protein homolog (1247 aa).

The disordered stretch occupies residues 1 to 43 (MTLGSETKTDVEVPIINGKHEIPQEENDSGHSSINTPDSSEPD). Residues 30-39 (GHSSINTPDS) are compositionally biased toward polar residues. In terms of domain architecture, Clu spans 329–579 (SDSLRAIELT…RSMPPDVHYL (251 aa)). Positions 1222–1247 (GKQQNGTTEESKTTDVAAQLDNETLD) are disordered.

It belongs to the CLU family.

Its subcellular location is the cytoplasm. Functionally, mRNA-binding protein involved in proper cytoplasmic distribution of mitochondria. The chain is Clustered mitochondria protein homolog from Caenorhabditis elegans.